The sequence spans 289 residues: Type II methyltransferase M.MjaIII (289 aa).

Trp-9, Lys-13, Asp-63, and Asp-199 together coordinate S-adenosyl-L-methionine.

It belongs to the N(4)/N(6)-methyltransferase family.

It catalyses the reaction a 2'-deoxyadenosine in DNA + S-adenosyl-L-methionine = an N(6)-methyl-2'-deoxyadenosine in DNA + S-adenosyl-L-homocysteine + H(+). In terms of biological role, an alpha subtype methylase that recognizes the double-stranded sequence 5'-GATC-3', methylates A-2 on both strands, and protects the DNA from cleavage by the MjaIII endonuclease. The protein is Type II methyltransferase M.MjaIII (mjaIIIM) of Methanocaldococcus jannaschii (strain ATCC 43067 / DSM 2661 / JAL-1 / JCM 10045 / NBRC 100440) (Methanococcus jannaschii).